The sequence spans 146 residues: Ribosome maturation factor RimP (146 aa).

This sequence belongs to the RimP family.

Its subcellular location is the cytoplasm. Functionally, required for maturation of 30S ribosomal subunits. The polypeptide is Ribosome maturation factor RimP (Helicobacter pylori (strain P12)).